The following is a 101-amino-acid chain: Small ribosomal subunit protein uS14 (101 aa).

It belongs to the universal ribosomal protein uS14 family. As to quaternary structure, part of the 30S ribosomal subunit. Contacts proteins S3 and S10.

Its function is as follows. Binds 16S rRNA, required for the assembly of 30S particles and may also be responsible for determining the conformation of the 16S rRNA at the A site. The chain is Small ribosomal subunit protein uS14 from Gluconacetobacter diazotrophicus (strain ATCC 49037 / DSM 5601 / CCUG 37298 / CIP 103539 / LMG 7603 / PAl5).